Reading from the N-terminus, the 102-residue chain is Large ribosomal subunit protein uL23 (102 aa).

It belongs to the universal ribosomal protein uL23 family. As to quaternary structure, part of the 50S ribosomal subunit. Contacts protein L29, and trigger factor when it is bound to the ribosome.

One of the early assembly proteins it binds 23S rRNA. One of the proteins that surrounds the polypeptide exit tunnel on the outside of the ribosome. Forms the main docking site for trigger factor binding to the ribosome. This chain is Large ribosomal subunit protein uL23, found in Chromobacterium violaceum (strain ATCC 12472 / DSM 30191 / JCM 1249 / CCUG 213 / NBRC 12614 / NCIMB 9131 / NCTC 9757 / MK).